The primary structure comprises 124 residues: NADPH-dependent 7-cyano-7-deazaguanine reductase (124 aa).

C40 serves as the catalytic Thioimide intermediate. D47 (proton donor) is an active-site residue. Residues 62–64 and 81–82 each bind substrate; these read VEL and HE.

It belongs to the GTP cyclohydrolase I family. QueF type 1 subfamily.

It is found in the cytoplasm. The enzyme catalyses 7-aminomethyl-7-carbaguanine + 2 NADP(+) = 7-cyano-7-deazaguanine + 2 NADPH + 3 H(+). Its pathway is tRNA modification; tRNA-queuosine biosynthesis. In terms of biological role, catalyzes the NADPH-dependent reduction of 7-cyano-7-deazaguanine (preQ0) to 7-aminomethyl-7-deazaguanine (preQ1). In Wolinella succinogenes (strain ATCC 29543 / DSM 1740 / CCUG 13145 / JCM 31913 / LMG 7466 / NCTC 11488 / FDC 602W) (Vibrio succinogenes), this protein is NADPH-dependent 7-cyano-7-deazaguanine reductase.